The sequence spans 269 residues: MASEIKKKLFWRAVVAEFLAMTLFVFISIGSALGFNYPLERNQTLVQDNVKVSLAFGLSIATLAQSVGHISGAHLNPAVTLGLLLSCQISILRAVMYIIAQCVGAIVATAILSGITSSLVDNSLGRNDLAHGVNSGQGLGIEIIGTLQLVLCVLATTDRRRRDLGGSAPLAIGLSVALGHLLAIDYTGCGINPARSFGSAVLTRNFSNHWIFWVGPFIGGALAVLIYDFILAPRSSDFTDRMKVWTSGQVEEYDLDADDINSRVEMKPK.

The Cytoplasmic segment spans residues 1-11 (MASEIKKKLFW). The helical transmembrane segment at 12-29 (RAVVAEFLAMTLFVFISI) threads the bilayer. The Extracellular segment spans residues 30–46 (GSALGFNYPLERNQTLV). Residues 47–65 (QDNVKVSLAFGLSIATLAQ) form a helical membrane-spanning segment. Over 66 to 68 (SVG) the chain is Cytoplasmic. The stretch at 69–82 (HISGAHLNPAVTLG) is an intramembrane region. The short motif at 76–78 (NPA) is the NPA 1 element. Residues 83–90 (LLLSCQIS) are Cytoplasmic-facing. Residues 91-109 (ILRAVMYIIAQCVGAIVAT) traverse the membrane as a helical segment. Residues 110-133 (AILSGITSSLVDNSLGRNDLAHGV) lie on the Extracellular side of the membrane. The helical transmembrane segment at 134-153 (NSGQGLGIEIIGTLQLVLCV) threads the bilayer. The Cytoplasmic portion of the chain corresponds to 154-163 (LATTDRRRRD). A helical membrane pass occupies residues 164–181 (LGGSAPLAIGLSVALGHL). Over 182–186 (LAIDY) the chain is Extracellular. Residues 187–199 (TGCGINPARSFGS) lie within the membrane without spanning it. An NPA 2 motif is present at residues 192–194 (NPA). At 200 to 206 (AVLTRNF) the chain is on the extracellular side. N205 is a glycosylation site (N-linked (GlcNAc...) asparagine). Residues 207–224 (SNHWIFWVGPFIGGALAV) form a helical membrane-spanning segment. Topologically, residues 225 to 269 (LIYDFILAPRSSDFTDRMKVWTSGQVEEYDLDADDINSRVEMKPK) are cytoplasmic. Position 247 is a phosphoserine (S247). Y253 carries the post-translational modification Phosphotyrosine. A Phosphoserine modification is found at S262.

Belongs to the MIP/aquaporin (TC 1.A.8) family. In terms of assembly, homotetramer; each monomer provides an independent water pore. Component of the ankyrin-1 complex in the erythrocyte, composed of ANK1, RHCE, RHAG, SLC4A1, EPB42, GYPA, GYPB and AQP1. Interacts with EPHB2; involved in endolymph production in the inner ear. Identified in a complex with STOM. Interacts (via the N-terminal) with ANK1 (via ANK 1-5 repeats). Interacts (via the C-terminal) with EPB42. As to expression, detected in erythrocytes (at protein level). In the kidney, expressed on luminal and basal borders of proximal tubules and in the thin limb of Henle's loop (at protein level).

The protein resides in the cell membrane. It carries out the reaction H2O(in) = H2O(out). The catalysed reaction is nitric oxide(out) = nitric oxide(in). It catalyses the reaction CO2(out) = CO2(in). The enzyme catalyses glycerol(in) = glycerol(out). It carries out the reaction H2O2(out) = H2O2(in). The catalysed reaction is K(+)(in) = K(+)(out). It catalyses the reaction Na(+)(in) = Na(+)(out). Forms a water channel that facilitates the transport of water across cell membranes, playing a crucial role in water homeostasis in various tissues. Could also be permeable to small solutes including hydrogen peroxide, glycerol and gases such as amonnia (NH3), nitric oxide (NO) and carbon dioxide (CO2). Recruited to the ankyrin-1 complex, a multiprotein complex of the erythrocyte membrane, it could be part of a CO2 metabolon, linking facilitated diffusion of CO2 across the membrane, anion exchange of Cl(-)/HCO3(-) and interconversion of dissolved CO2 and carbonic acid in the cytosol. In vitro, it shows non-selective gated cation channel activity and may be permeable to cations like K(+) and Na(+) in vivo. This Mus musculus (Mouse) protein is Aquaporin-1.